Consider the following 387-residue polypeptide: Ferrochelatase (387 aa).

Fe cation contacts are provided by His-196 and Glu-277.

The protein belongs to the ferrochelatase family.

The protein localises to the cytoplasm. The catalysed reaction is heme b + 2 H(+) = protoporphyrin IX + Fe(2+). It participates in porphyrin-containing compound metabolism; protoheme biosynthesis; protoheme from protoporphyrin-IX: step 1/1. Catalyzes the ferrous insertion into protoporphyrin IX. This is Ferrochelatase from Gloeothece citriformis (strain PCC 7424) (Cyanothece sp. (strain PCC 7424)).